A 421-amino-acid chain; its full sequence is Fusaric acid cluster transcription factor FUB10 (421 aa).

The zn(2)-C6 fungal-type DNA-binding region spans 16 to 47 (CDRCRAQKLRCHRDSGHSTDACLRCLKSGIEC). Positions 50 to 92 (SKARPTGRPPSRQVQPTVVVEQGDTSSSSHTTDSSPSAGGTDM) are disordered. Positions 74-86 (TSSSSHTTDSSPS) are enriched in low complexity.

The protein localises to the nucleus. In terms of biological role, transcription factor that regulates the expression of the gene cluster that mediates the biosynthesis of fusaric acid, a mycotoxin with low to moderate toxicity to animals and humans, but with high phytotoxic properties. The chain is Fusaric acid cluster transcription factor FUB10 from Gibberella moniliformis (strain M3125 / FGSC 7600) (Maize ear and stalk rot fungus).